A 296-amino-acid chain; its full sequence is 4-hydroxy-tetrahydrodipicolinate synthase (296 aa).

Thr49 serves as a coordination point for pyruvate. The Proton donor/acceptor role is filled by Tyr137. Lys166 serves as the catalytic Schiff-base intermediate with substrate. Residue Ile208 participates in pyruvate binding.

This sequence belongs to the DapA family. In terms of assembly, homotetramer; dimer of dimers.

The protein resides in the cytoplasm. It catalyses the reaction L-aspartate 4-semialdehyde + pyruvate = (2S,4S)-4-hydroxy-2,3,4,5-tetrahydrodipicolinate + H2O + H(+). It participates in amino-acid biosynthesis; L-lysine biosynthesis via DAP pathway; (S)-tetrahydrodipicolinate from L-aspartate: step 3/4. In terms of biological role, catalyzes the condensation of (S)-aspartate-beta-semialdehyde [(S)-ASA] and pyruvate to 4-hydroxy-tetrahydrodipicolinate (HTPA). In Chlorobium luteolum (strain DSM 273 / BCRC 81028 / 2530) (Pelodictyon luteolum), this protein is 4-hydroxy-tetrahydrodipicolinate synthase.